We begin with the raw amino-acid sequence, 208 residues long: Outer-membrane lipoprotein carrier protein (208 aa).

A signal peptide spans 1–25 (MKKRFSAKLFSALVLSISFFSAANA).

It belongs to the LolA family. In terms of assembly, monomer.

It is found in the periplasm. In terms of biological role, participates in the translocation of lipoproteins from the inner membrane to the outer membrane. Only forms a complex with a lipoprotein if the residue after the N-terminal Cys is not an aspartate (The Asp acts as a targeting signal to indicate that the lipoprotein should stay in the inner membrane). In Vibrio parahaemolyticus serotype O3:K6 (strain RIMD 2210633), this protein is Outer-membrane lipoprotein carrier protein.